Here is a 302-residue protein sequence, read N- to C-terminus: MEQKRLTHLRQLEAESIHIIREVAAEFANPVMLYSIGKDSSVMLHLARKAFYPGTLPFPLLHVDTGWKFREMYAFRDRTANAYGCELLVHKNPEGVAMGINPFVHGSAKHTDIMKTEGLKQALNKYGFDAAFGGARRDEEKSRAKERIYSFRDRFHRWDPKNQRPELWRNYNGQINKGESIRVFPLSNWTEQDIWQYIWLENIDIVPLYLAAERPVLERDGMLMMVDDDRIDLQPGEVIKKRMVRFRTLGCWPLTGAVESHAQTLPEIIEEMLVSTTSERQGRMIDRDQAGSMELKKRQGYF.

It belongs to the PAPS reductase family. CysD subfamily. In terms of assembly, heterodimer composed of CysD, the smaller subunit, and CysN.

The enzyme catalyses sulfate + ATP + H(+) = adenosine 5'-phosphosulfate + diphosphate. It participates in sulfur metabolism; hydrogen sulfide biosynthesis; sulfite from sulfate: step 1/3. In terms of biological role, with CysN forms the ATP sulfurylase (ATPS) that catalyzes the adenylation of sulfate producing adenosine 5'-phosphosulfate (APS) and diphosphate, the first enzymatic step in sulfur assimilation pathway. APS synthesis involves the formation of a high-energy phosphoric-sulfuric acid anhydride bond driven by GTP hydrolysis by CysN coupled to ATP hydrolysis by CysD. This is Sulfate adenylyltransferase subunit 2 from Salmonella schwarzengrund (strain CVM19633).